The sequence spans 105 residues: Antitoxin HigA-1 (105 aa).

The 55-residue stretch at 15–69 folds into the HTH cro/C1-type domain; it reads LKVEFLEPMGITSKALAEAMGVHRNTVSNLINGGVLTAPVAIKLAAALGNTPEFW. The H-T-H motif DNA-binding region spans 27-46; it reads SKALAEAMGVHRNTVSNLIN.

In terms of biological role, antitoxin component of a type II toxin-antitoxin (TA) system that counteracts the effect of the HigB-1 toxin. Binds to its own promoter and regulates transcription of the higB-1/higA-1 operon. In Vibrio cholerae serotype O1 (strain ATCC 39315 / El Tor Inaba N16961), this protein is Antitoxin HigA-1 (higA-1).